The sequence spans 396 residues: MIFVFANIFKVPTVSPSVMAISVRLASTEATFQTKPFKLHKLDSGPDINVHVTKEDAVHYYTQMLTIRRMESAAGNLYKEKKVRGFCHLYSGQEACAVGTKAAMDAGDAAVTAYRCHGWTYLSGSSVAKVLCELTGRITGNVYGKGGSMHMYGENFYGGNGIVGAQQPLGTGIAFAMKYRKEKNVCITMFGDGATNQGQLFESMNMAKLWDLPVLYVCENNGYGMGTAAARSSASTDYYTRGDYVPGIWVDGMDVLAVRQAVRWAKEWCNAGKGPLMIEMATYRYSGHSMSDPGTSYRTREEVQEVRKTRDPITGFKDKIVTAGLVTEDEIKEIDKQVRKEIDAAVKQAHTDKESPVELMLTDIYYNTPAQYVRCTTDEVLQKYLTSEEAVKALAK.

Residues 1-25 constitute a mitochondrion transit peptide; sequence MIFVFANIFKVPTVSPSVMAISVRL. Pyruvate-binding residues include His88, Tyr114, Arg115, Gly153, Gly161, Val163, Asp192, Gly193, Ala194, Asn221, and Tyr223. Thiamine diphosphate-binding residues include Tyr114 and Arg115. 6 residues coordinate thiamine diphosphate: Gly161, Val163, Asp192, Gly193, Ala194, and Asn221. Asp192 contacts Mg(2+). Residues Asn221 and Tyr223 each coordinate Mg(2+). His288 serves as a coordination point for thiamine diphosphate. Phosphoserine occurs at positions 289 and 296.

As to quaternary structure, heterotetramer of two PDHA1 and two PDHB subunits. The heterotetramer interacts with DLAT, and is part of the multimeric pyruvate dehydrogenase complex that contains multiple copies of pyruvate dehydrogenase (E1), dihydrolipoamide acetyltransferase (DLAT, E2) and lipoamide dehydrogenase (DLD, E3). Requires thiamine diphosphate as cofactor. It depends on Mg(2+) as a cofactor.

The protein resides in the mitochondrion matrix. The enzyme catalyses N(6)-[(R)-lipoyl]-L-lysyl-[protein] + pyruvate + H(+) = N(6)-[(R)-S(8)-acetyldihydrolipoyl]-L-lysyl-[protein] + CO2. Pyruvate dehydrogenase activity is inhibited by phosphorylation of PDHA1; it is reactivated by dephosphorylation. In terms of biological role, the pyruvate dehydrogenase complex catalyzes the overall conversion of pyruvate to acetyl-CoA and CO(2), and thereby links the glycolytic pathway to the tricarboxylic cycle. The sequence is that of Pyruvate dehydrogenase E1 component subunit alpha type I, mitochondrial from Ascaris suum (Pig roundworm).